An 809-amino-acid polypeptide reads, in one-letter code: Transitional endoplasmic reticulum ATPase homolog 1 (809 aa).

The interval 1–21 is disordered; the sequence is MASVPTHQSEKEKKNDELSTA. Residues 8–21 are compositionally biased toward basic and acidic residues; the sequence is QSEKEKKNDELSTA. Residues 253-259, Asn354, His390, and 527-532 each bind ATP; these read PGTGKTL and GCGKTL. The interval 779–809 is disordered; it reads FGNNFKFPGEQRGSDAPSAPVPAQDDDDLYN. Positions 803–809 are interaction with ufd-2; it reads DDDDLYN.

The protein belongs to the AAA ATPase family. CDC48 subfamily. Homohexamer; oligomerization is ATP-independent. Forms a ring-shaped particle of 18.3 nm diameter, that displays 6-fold radial symmetry. Interacts with cdc-48.2 and thus may form heterohexamers. Forms a complex composed of cdc-48.1, him-6 and crp-1; within the complex, interacts with helicase him-6 and GTPase crp-1. Forms a complex composed of deubiquitinating enzyme atx-3, adapter ubxn-5 and cdc-48.1; within the complex, interacts (via N-terminus) with ubxn-5 and with atx-3. Forms a complex composed of deubiquitinating enzyme atx-3, E4 ubiquitin-protein ligase ufd-2 and cdc-48.1; within the complex, interacts with atx-3 and (via DDDLYN motif) with ufd-2. Interacts (via N-terminus) with atx-3 (via RRDR motif); the interaction is not required for atx-3 enzymatic activity. Forms a complex composed of cdc-48.1, myosin chaperone unc-45, ubiquitin-protein ligases ufd-2 and chn-1; within the complex, interacts (via DDDLYN motif) with ufd-2 and targets myosin chaperone unc-45 for proteasomal degradation. Forms a complex composed of ubxn-3, ufd-1, npl-4.1 and cdc-48.1; within the complex, interacts (via N-terminus) with ubxn-3 (via FPK motif) and with ufd-1. Forms a complex composed of ubxn-3, cdc-48.1 and/or cdc-48.2 and substrate cdt-1. Interacts (via N-terminus) with ubxn-1. Interacts (via N-terminus) with ubxn-2. Interacts (via N-terminus) with ubxn-4. Interacts with ubxn-6. Interacts with ufd-3. Does not interact with air-2. In terms of tissue distribution, expressed in germ cells and spermatheca. Expressed in body wall muscles.

It is found in the cytoplasm. Its subcellular location is the perinuclear region. It catalyses the reaction ATP + H2O = ADP + phosphate + H(+). Its activity is regulated as follows. The first ATP-binding region has low ATPase activity. The second ATP-binding region is responsible for ATPase activity. ATP binding to the first ATP-binding region induces intrinsic activity of the second ATP-binding region. While ATP binding to the first ATP-binding region appears to prevent ATP hydrolysis by the second ATP-binding region, ADP-binding to first region promotes the coordinate and cooperative ATPase cycle of the second ATP-binding region. ATP binding to the first ATP-binding region induces a conformational change, promoting the rotation of the first ATP-binding region relative to the second ATP-binding region in the hexamer. Inhibited by N-ethylmaleimide (NEM). In terms of biological role, ATP-dependent chaperone which probably uses the energy provided by ATP hydrolysis to generate mechanical force to unfold substrate proteins, disassemble protein complexes, and disaggregate protein aggregates. Can also prevent aggregation of unfolded proteins also in an ATP-independent manner. Targets polyubiquitinated proteins for proteasomal degradation by binding to 'Lys-48'-linked polyubiquitin chains. Involved in the cytoplasmic elimination of misfolded proteins exported from the ER. This pathway, known as ERAD, prevents the activation of the unfolded protein response (UPR) caused by the accumulation of misfolded proteins in the ER. In association with helicase him-6 and GTPase crp-1, regulates the unfolded protein response (UPR) following ER stress, probably independently of the ERAD pathway. Together with udf-2 and chn-1, regulates myosin assembly in body wall muscles by targeting myosin chaperone unc-45 for proteasomal degradation. Together with the ufd-1-npl-4 complex, controls the switch from spermatogenesis to oogenesis by regulating E3 ligase cul-2 complex-mediated tra-1 proteasomal degradation. During oocyte meiosis and together with cdc-48.2, required for chromosome condensation at the diakinesis phase in prophase I and for progression of metaphase I. During the first embryonic cell division, regulates DNA replication and thus chromosome segregation and decondensation, and nuclear envelope re-assembly. In S phase and in association with ufd-1, npl-4.1 and/or npl-4.2 and ubxn-3, ensures the degradation of DNA licensing factor cdt-1 after the initiation of DNA replication and thus the disassembly of the DNA replication CMG helicase complex by promoting the dissociation from chromatin of several of its components including cdc-45 and sld-5. Regulates ubxn-3 nuclear localization during S phase. During the first embryonic cell divisions and together with cdc-48.2, regulates the re-assembly of the nuclear envelope after mitosis possibly by inactivating kinase air-2, a component of the chromosomal passenger complex (CPC). However, in another study, cdc-48.1 does not appear to be implicated in the regulation of air-2. The chain is Transitional endoplasmic reticulum ATPase homolog 1 from Caenorhabditis elegans.